The primary structure comprises 79 residues: Major outer membrane lipoprotein Lpp 2 (79 aa).

The N-terminal stretch at 1-21 is a signal peptide; it reads MNRTNKLILGAVVLGSALLAG. The N-palmitoyl cysteine moiety is linked to residue Cys22. Cys22 carries the S-diacylglycerol cysteine lipid modification. 2 consecutive repeats follow at residues 25 to 35 and 39 to 49; these read NAKIDQLSSDV and SAKVDQLSNDV. Residues 28-76 are a coiled coil; sequence IDQLSSDVQTLSAKVDQLSNDVNAMRSDIQAAKDDAARANQRLDNKVSR. Positions 60–79 are disordered; it reads KDDAARANQRLDNKVSRVRK. Lys79 is modified (N6-murein peptidoglycan lysine).

It belongs to the Lpp family. Homotrimer.

The protein resides in the cell outer membrane. The protein localises to the secreted. It is found in the cell wall. A highly abundant outer membrane lipoprotein that controls the distance between the inner and outer membranes. The only protein known to be covalently linked to the peptidoglycan network (PGN). Also non-covalently binds the PGN. The link between the cell outer membrane and PGN contributes to maintenance of the structural and functional integrity of the cell envelope, and maintains the correct distance between the PGN and the outer membrane. The chain is Major outer membrane lipoprotein Lpp 2 from Salmonella paratyphi A (strain ATCC 9150 / SARB42).